Reading from the N-terminus, the 621-residue chain is Amino-acid acetyltransferase, mitochondrial (621 aa).

Residues 1–77 (MIPRAPPSTQ…RSYLASFGVQ (77 aa)) constitute a mitochondrion transit peptide. Positions 213–233 (PKPGSEEESEPGFSPPETHIY) are disordered. An N-acetyltransferase domain is found at 424–600 (LPIRVVRSVS…GSAGLSFIED (177 aa)).

This sequence belongs to the acetyltransferase family.

It localises to the mitochondrion. It catalyses the reaction L-glutamate + acetyl-CoA = N-acetyl-L-glutamate + CoA + H(+). It participates in amino-acid biosynthesis; L-arginine biosynthesis; N(2)-acetyl-L-ornithine from L-glutamate: step 1/4. Functionally, N-acetylglutamate synthase involved in arginine biosynthesis. The chain is Amino-acid acetyltransferase, mitochondrial (ARG2) from Coprinopsis cinerea (strain Okayama-7 / 130 / ATCC MYA-4618 / FGSC 9003) (Inky cap fungus).